The chain runs to 400 residues: MDKSLFEQARPILEQIQDNGFEAYYVGGSVRDYVMGRNIHDIDITTSATPDEIESIFSHTIPVGKEHGTINVVFNDENYEVTTFRAEEDYVDHRRPSGVTFVRDLYEDLQRRDFTMNAIAMDTAYKLYDYFDGQQDINNRIIRTVGIAEERFQEDALRMIRCLRFQSQLSFDIAMETFEAMRTQMADIKFLSIERIVIELTKLMRGINVEESFNHLKSLKAFNYMPYFEQLDMNQINVTEPIDLELLIAIVSVKFDINYSLKPLKLSNRQVKDINQYIQIMNALPSIITKEQLKMFVYDYDTNLIKNVMVAADVLKANDIQGHEPLIVNLQTIDETLHRLPMHNRKDMMVNGGVLMAHLNAKSGPWLKDVLRQIEIAIVTGKVSNEETEILKWVDNHVKI.

Residues glycine 28 and arginine 31 each contribute to the ATP site. Residues glycine 28 and arginine 31 each contribute to the CTP site. Mg(2+) contacts are provided by aspartate 41 and aspartate 43. ATP contacts are provided by arginine 112, aspartate 155, arginine 158, arginine 161, and arginine 164. CTP contacts are provided by arginine 112, aspartate 155, arginine 158, arginine 161, and arginine 164.

The protein belongs to the tRNA nucleotidyltransferase/poly(A) polymerase family. Bacterial CCA-adding enzyme type 3 subfamily. As to quaternary structure, homodimer. It depends on Mg(2+) as a cofactor.

It catalyses the reaction a tRNA precursor + 2 CTP + ATP = a tRNA with a 3' CCA end + 3 diphosphate. It carries out the reaction a tRNA with a 3' CCA end + 2 CTP + ATP = a tRNA with a 3' CCACCA end + 3 diphosphate. Functionally, catalyzes the addition and repair of the essential 3'-terminal CCA sequence in tRNAs without using a nucleic acid template. Adds these three nucleotides in the order of C, C, and A to the tRNA nucleotide-73, using CTP and ATP as substrates and producing inorganic pyrophosphate. tRNA 3'-terminal CCA addition is required both for tRNA processing and repair. Also involved in tRNA surveillance by mediating tandem CCA addition to generate a CCACCA at the 3' terminus of unstable tRNAs. While stable tRNAs receive only 3'-terminal CCA, unstable tRNAs are marked with CCACCA and rapidly degraded. The sequence is that of CCA-adding enzyme from Staphylococcus aureus (strain Mu3 / ATCC 700698).